The sequence spans 814 residues: G-type lectin S-receptor-like serine/threonine-protein kinase At1g61370 (814 aa).

A signal peptide spans 1–25; it reads MGKIGIVFFASLLFLLIIFPSCAFA. The region spanning 26–145 is the Bulb-type lectin domain; sequence AITRASPLSI…VSERNLWESF (120 aa). Residues 26–433 are Extracellular-facing; the sequence is AITRASPLSI…SELAGSNRVK (408 aa). Residues asparagine 43, asparagine 54, asparagine 89, asparagine 95, asparagine 253, and asparagine 271 are each glycosylated (N-linked (GlcNAc...) asparagine). Positions 282 to 318 constitute an EGF-like domain; it reads PVSSCDVYNTCGPFGLCIRSNPPKCECLKGFVPKSDE. Intrachain disulfides connect cysteine 286/cysteine 298 and cysteine 292/cysteine 306. Residues asparagine 324, asparagine 334, asparagine 340, and asparagine 383 are each glycosylated (N-linked (GlcNAc...) asparagine). Residues 337 to 423 enclose the PAN domain; the sequence is CDVNSSATAQ…GETLSIRLAS (87 aa). 2 disulfides stabilise this stretch: cysteine 376/cysteine 397 and cysteine 380/cysteine 386. A helical membrane pass occupies residues 434 to 454; that stretch reads IIVASIVSISVFMILVFASYW. Residues 455-814 are Cytoplasmic-facing; it reads YWRYKAKQND…NITQTAIVGR (360 aa). The Protein kinase domain occupies 501–786; that stretch reads FSMENKLGQG…DLPKPKQPVF (286 aa). ATP contacts are provided by residues 507–515 and lysine 529; that span reads LGQGGFGPV. A phosphoserine mark is found at serine 535 and serine 550. The caM-binding stretch occupies residues 590-607; that stretch reads TKKLELDWPKRFEIIQGI. The active-site Proton acceptor is aspartate 626. Serine 630 and serine 643 each carry phosphoserine. Threonine 660 is subject to Phosphothreonine. Residues serine 703, serine 704, serine 797, and serine 802 each carry the phosphoserine modification. A Phosphothreonine modification is found at threonine 809.

The protein belongs to the protein kinase superfamily. Ser/Thr protein kinase family.

The protein localises to the cell membrane. It carries out the reaction L-seryl-[protein] + ATP = O-phospho-L-seryl-[protein] + ADP + H(+). The enzyme catalyses L-threonyl-[protein] + ATP = O-phospho-L-threonyl-[protein] + ADP + H(+). The polypeptide is G-type lectin S-receptor-like serine/threonine-protein kinase At1g61370 (Arabidopsis thaliana (Mouse-ear cress)).